Here is a 320-residue protein sequence, read N- to C-terminus: Ferrochelatase (320 aa).

Residues His-194 and Glu-275 each contribute to the Fe cation site.

It belongs to the ferrochelatase family. Monomer.

It is found in the cytoplasm. It catalyses the reaction heme b + 2 H(+) = protoporphyrin IX + Fe(2+). It functions in the pathway porphyrin-containing compound metabolism; protoheme biosynthesis; protoheme from protoporphyrin-IX: step 1/1. Functionally, catalyzes the ferrous insertion into protoporphyrin IX. The chain is Ferrochelatase from Escherichia coli O81 (strain ED1a).